The primary structure comprises 300 residues: B3 domain-containing protein At5g57720 (300 aa).

Residues 11–105 (PDFLKIFNSH…SFWVRIHRNG (95 aa)) constitute a DNA-binding region (TF-B3). The interval 115–142 (KIQEISDDEDETNGDGDPHMEEEGDTDE) is disordered. The span at 119–129 (ISDDEDETNGD) shows a compositional bias: acidic residues.

It localises to the nucleus. This chain is B3 domain-containing protein At5g57720, found in Arabidopsis thaliana (Mouse-ear cress).